A 158-amino-acid polypeptide reads, in one-letter code: NADH-quinone oxidoreductase subunit B (158 aa).

Residues C36, C37, C101, and C131 each contribute to the [4Fe-4S] cluster site.

Belongs to the complex I 20 kDa subunit family. NDH-1 is composed of 14 different subunits. Subunits NuoB, C, D, E, F, and G constitute the peripheral sector of the complex. Requires [4Fe-4S] cluster as cofactor.

It is found in the cell inner membrane. The enzyme catalyses a quinone + NADH + 5 H(+)(in) = a quinol + NAD(+) + 4 H(+)(out). NDH-1 shuttles electrons from NADH, via FMN and iron-sulfur (Fe-S) centers, to quinones in the respiratory chain. The immediate electron acceptor for the enzyme in this species is believed to be ubiquinone. Couples the redox reaction to proton translocation (for every two electrons transferred, four hydrogen ions are translocated across the cytoplasmic membrane), and thus conserves the redox energy in a proton gradient. The sequence is that of NADH-quinone oxidoreductase subunit B from Francisella tularensis subsp. tularensis (strain FSC 198).